The chain runs to 343 residues: 3-dehydroquinate synthase (343 aa).

Residues 61–66 (SGEKYK), 95–99 (GVISD), 119–120 (TT), lysine 132, lysine 141, and 159–162 (FLKT) contribute to the NAD(+) site. Positions 174, 231, and 248 each coordinate Zn(2+).

It belongs to the sugar phosphate cyclases superfamily. Dehydroquinate synthase family. Co(2+) is required as a cofactor. The cofactor is Zn(2+). NAD(+) serves as cofactor.

It localises to the cytoplasm. The catalysed reaction is 7-phospho-2-dehydro-3-deoxy-D-arabino-heptonate = 3-dehydroquinate + phosphate. It functions in the pathway metabolic intermediate biosynthesis; chorismate biosynthesis; chorismate from D-erythrose 4-phosphate and phosphoenolpyruvate: step 2/7. Functionally, catalyzes the conversion of 3-deoxy-D-arabino-heptulosonate 7-phosphate (DAHP) to dehydroquinate (DHQ). This is 3-dehydroquinate synthase from Helicobacter pylori (strain HPAG1).